Reading from the N-terminus, the 367-residue chain is Riboflavin biosynthesis protein VVA0006 (367 aa).

Residue 215–219 participates in GTP binding; it reads RLHSE. Zn(2+) contacts are provided by Cys-220, Cys-231, and Cys-233. GTP is bound by residues Gln-236, 258–260, and Thr-280; that span reads EGR. The Proton acceptor role is filled by Asp-292. Arg-294 functions as the Nucleophile in the catalytic mechanism. Residues Thr-315 and Lys-320 each contribute to the GTP site.

In the N-terminal section; belongs to the YbiA family. This sequence in the C-terminal section; belongs to the GTP cyclohydrolase II family. Zn(2+) serves as cofactor.

The enzyme catalyses 2,5-diamino-6-hydroxy-4-(5-phosphoribosylamino)-pyrimidine + H2O = 2,5,6-triamino-4-hydroxypyrimidine + D-ribose 5-phosphate. It carries out the reaction 5-amino-6-(5-phospho-D-ribosylamino)uracil + H2O = 5,6-diaminouracil + D-ribose 5-phosphate. It catalyses the reaction GTP + 4 H2O = 2,5-diamino-6-hydroxy-4-(5-phosphoribosylamino)-pyrimidine + formate + 2 phosphate + 3 H(+). It functions in the pathway cofactor biosynthesis; riboflavin biosynthesis; 5-amino-6-(D-ribitylamino)uracil from GTP: step 1/4. In terms of biological role, catalyzes the hydrolysis of the N-glycosidic bond in the first two intermediates of riboflavin biosynthesis, which are highly reactive metabolites, yielding relatively innocuous products. Thus, can divert a surplus of harmful intermediates into relatively harmless products and pre-empt the damage these intermediates would otherwise do. Has no activity against GTP, nucleoside monophosphates or ADP-ribose. Its function is as follows. Catalyzes the conversion of GTP to 2,5-diamino-6-ribosylamino-4(3H)-pyrimidinone 5'-phosphate (DARP), formate and pyrophosphate. The protein is Riboflavin biosynthesis protein VVA0006 of Vibrio vulnificus (strain YJ016).